The following is a 212-amino-acid chain: Pyridoxine/pyridoxamine 5'-phosphate oxidase (212 aa).

Residues 8-11 and Lys-66 contribute to the substrate site; that span reads RREY. FMN is bound by residues 61–66, 76–77, Arg-82, Lys-83, and Gln-105; these read RIVLLK and FT. 3 residues coordinate substrate: Tyr-123, Arg-127, and Ser-131. Residues 140–141 and Trp-185 each bind FMN; that span reads QS. Residue 191 to 193 coordinates substrate; it reads RLH. Arg-195 lines the FMN pocket.

It belongs to the pyridoxamine 5'-phosphate oxidase family. Homodimer. FMN is required as a cofactor.

It catalyses the reaction pyridoxamine 5'-phosphate + O2 + H2O = pyridoxal 5'-phosphate + H2O2 + NH4(+). It carries out the reaction pyridoxine 5'-phosphate + O2 = pyridoxal 5'-phosphate + H2O2. The protein operates within cofactor metabolism; pyridoxal 5'-phosphate salvage; pyridoxal 5'-phosphate from pyridoxamine 5'-phosphate: step 1/1. It functions in the pathway cofactor metabolism; pyridoxal 5'-phosphate salvage; pyridoxal 5'-phosphate from pyridoxine 5'-phosphate: step 1/1. Its function is as follows. Catalyzes the oxidation of either pyridoxine 5'-phosphate (PNP) or pyridoxamine 5'-phosphate (PMP) into pyridoxal 5'-phosphate (PLP). The polypeptide is Pyridoxine/pyridoxamine 5'-phosphate oxidase (Shewanella sp. (strain W3-18-1)).